Consider the following 426-residue polypeptide: Serine--tRNA ligase (426 aa).

L-serine is bound at residue Thr233–Glu235. Arg264–Glu266 lines the ATP pocket. Glu287 provides a ligand contact to L-serine. Glu351–Ser354 contacts ATP. Residue Ser387 coordinates L-serine.

The protein belongs to the class-II aminoacyl-tRNA synthetase family. Type-1 seryl-tRNA synthetase subfamily. Homodimer. The tRNA molecule binds across the dimer.

The protein resides in the cytoplasm. The enzyme catalyses tRNA(Ser) + L-serine + ATP = L-seryl-tRNA(Ser) + AMP + diphosphate + H(+). It catalyses the reaction tRNA(Sec) + L-serine + ATP = L-seryl-tRNA(Sec) + AMP + diphosphate + H(+). It participates in aminoacyl-tRNA biosynthesis; selenocysteinyl-tRNA(Sec) biosynthesis; L-seryl-tRNA(Sec) from L-serine and tRNA(Sec): step 1/1. Its function is as follows. Catalyzes the attachment of serine to tRNA(Ser). Is also able to aminoacylate tRNA(Sec) with serine, to form the misacylated tRNA L-seryl-tRNA(Sec), which will be further converted into selenocysteinyl-tRNA(Sec). The polypeptide is Serine--tRNA ligase (Clostridium novyi (strain NT)).